Here is a 423-residue protein sequence, read N- to C-terminus: Kynureninase (423 aa).

Pyridoxal 5'-phosphate is bound by residues Leu105, Ser106, 133–136 (FPSD), Asp218, His221, and Tyr243. Lys244 bears the N6-(pyridoxal phosphate)lysine mark. Pyridoxal 5'-phosphate contacts are provided by Trp273 and Asn301.

This sequence belongs to the kynureninase family. In terms of assembly, homodimer. Pyridoxal 5'-phosphate is required as a cofactor.

It catalyses the reaction L-kynurenine + H2O = anthranilate + L-alanine + H(+). The enzyme catalyses 3-hydroxy-L-kynurenine + H2O = 3-hydroxyanthranilate + L-alanine + H(+). It functions in the pathway amino-acid degradation; L-kynurenine degradation; L-alanine and anthranilate from L-kynurenine: step 1/1. It participates in cofactor biosynthesis; NAD(+) biosynthesis; quinolinate from L-kynurenine: step 2/3. Functionally, catalyzes the cleavage of L-kynurenine (L-Kyn) and L-3-hydroxykynurenine (L-3OHKyn) into anthranilic acid (AA) and 3-hydroxyanthranilic acid (3-OHAA), respectively. The sequence is that of Kynureninase from Xanthomonas oryzae pv. oryzae (strain MAFF 311018).